Here is a 681-residue protein sequence, read N- to C-terminus: Dipeptidyl carboxypeptidase (681 aa).

His470 contacts Zn(2+). Glu471 is a catalytic residue. Residues His474 and His477 each contribute to the Zn(2+) site.

Belongs to the peptidase M3 family. The cofactor is Zn(2+).

The protein localises to the cytoplasm. The enzyme catalyses Hydrolysis of unblocked, C-terminal dipeptides from oligopeptides, with broad specificity. Does not hydrolyze bonds in which P1' is Pro, or both P1 and P1' are Gly.. Its activity is regulated as follows. Stimulated by Mn(2+), Mg(2+), Co(2+) and Ca(2+), inhibited by Cu(2+), Ni(2+), Zn(2+), chymostatin and 1,10-phenanthroline. Functionally, removes dipeptides from the C-termini of N-blocked tripeptides, tetrapeptides and larger peptides. This is Dipeptidyl carboxypeptidase from Escherichia coli (strain K12).